Reading from the N-terminus, the 160-residue chain is CXXC motif containing zinc binding protein (160 aa).

Cysteine 33, cysteine 36, cysteine 67, and cysteine 70 together coordinate Zn(2+). At serine 75 the chain carries Phosphoserine.

Belongs to the UPF0587 family. In terms of assembly, monomer.

This is CXXC motif containing zinc binding protein (CZIB) from Bos taurus (Bovine).